A 252-amino-acid polypeptide reads, in one-letter code: tRNA pseudouridine synthase A (252 aa).

Catalysis depends on Asp-51, which acts as the Nucleophile. Tyr-105 contacts substrate.

The protein belongs to the tRNA pseudouridine synthase TruA family.

It carries out the reaction uridine(38/39/40) in tRNA = pseudouridine(38/39/40) in tRNA. Formation of pseudouridine at positions 38, 39 and 40 in the anticodon stem and loop of transfer RNAs. The sequence is that of tRNA pseudouridine synthase A from Thermoplasma acidophilum (strain ATCC 25905 / DSM 1728 / JCM 9062 / NBRC 15155 / AMRC-C165).